Reading from the N-terminus, the 803-residue chain is Volume-regulated anion channel subunit LRRC8C (803 aa).

The Cytoplasmic segment spans residues 1–22; it reads MIPVTEFRQFSEQQPAFRVLKP. A helical membrane pass occupies residues 23–43; it reads WWDVFTDYLSVAMLMIGVFGC. The Extracellular segment spans residues 44-125; the sequence is TLQVMQDKII…YERALHWYAK (82 aa). Intrachain disulfides connect Cys-54–Cys-308 and Cys-115–Cys-293. Asn-64 and Asn-70 each carry an N-linked (GlcNAc...) asparagine glycan. The helical transmembrane segment at 126-146 threads the bilayer; that stretch reads YFPYLVLIHTLVFMLCSNFWF. Topologically, residues 147–266 are cytoplasmic; that stretch reads KFPGSSSKIE…ILYAMYVRQT (120 aa). The interval 177–211 is disordered; it reads EVSGEDSEEKDNRKNNMNRSNTIQSGPEGSLVKSQ. Residues 191–211 are compositionally biased toward polar residues; sequence NNMNRSNTIQSGPEGSLVKSQ. Ser-212 and Ser-215 each carry phosphoserine. A helical membrane pass occupies residues 267-287; that stretch reads VLKVIKFLIIIAYNSALVSKV. At 288–320 the chain is on the extracellular side; it reads QFTVDCNVDIQDMTGYKNFSCNHTMAHLFSKLS. A helical transmembrane segment spans residues 321-341; it reads FCYLCFVSIYGLTCLYTLYWL. The Cytoplasmic portion of the chain corresponds to 342 to 803; that stretch reads FYRSLREYSF…SDVREQMKAD (462 aa). 17 LRR repeats span residues 397-420, 421-443, 446-466, 467-488, 490-513, 515-537, 541-563, 565-587, 588-611, 613-635, 637-659, 660-682, 684-705, 706-728, 730-751, 752-774, and 776-799; these read ENKL…KLQT, NAHN…VFEI, LQSL…IAQL, DNLQ…ALSF, KENL…MYGL, NLEE…TLES, LKSL…VVDV, SHLQ…NLKK, MTNL…VFSL, SLQE…SFQH, RKLT…IKKL, TSLE…LFLC, KIRY…IGVL, QSLQ…LYFC, KLKT…IGNL, LFLS…LGDC, and ALKR…VREQ.

The protein belongs to the LRRC8 family. Heterohexamer; oligomerizes with other LRRC8 proteins (LRRC8A, LRRC8B, LRRC8D and/or LRRC8E) to form a heterohexamer. Homoheptamer; inactive, likely because it is not targeted to the plasma membrane in the absence of LRRC8A. In vivo, the subunit composition may depend primarily on expression levels, and heterooligomeric channels containing various proportions of the different LRRC8 proteins may coexist.

The protein resides in the cell membrane. It is found in the endoplasmic reticulum membrane. The catalysed reaction is chloride(in) = chloride(out). It carries out the reaction iodide(out) = iodide(in). The enzyme catalyses taurine(out) = taurine(in). It catalyses the reaction 2',3'-cGAMP(out) = 2',3'-cGAMP(in). Functionally, non-essential component of the volume-regulated anion channel (VRAC, also named VSOAC channel), an anion channel required to maintain a constant cell volume in response to extracellular or intracellular osmotic changes. The VRAC channel conducts iodide better than chloride and can also conduct organic osmolytes like taurine. Plays a redundant role in the efflux of amino acids, such as aspartate and glutamate, in response to osmotic stress. The VRAC channel also mediates transport of immunoreactive cyclic dinucleotide GMP-AMP (2'-3'-cGAMP), an immune messenger produced in response to DNA virus in the cytosol. Channel activity requires LRRC8A plus at least one other family member (LRRC8B, LRRC8C, LRRC8D or LRRC8E); channel characteristics depend on the precise subunit composition. This Rattus norvegicus (Rat) protein is Volume-regulated anion channel subunit LRRC8C.